The primary structure comprises 67 residues: Large ribosomal subunit protein bL35 (67 aa).

The protein belongs to the bacterial ribosomal protein bL35 family.

The protein is Large ribosomal subunit protein bL35 of Dehalococcoides mccartyi (strain ATCC BAA-2266 / KCTC 15142 / 195) (Dehalococcoides ethenogenes (strain 195)).